Consider the following 754-residue polypeptide: Leucine-rich repeat-containing protein 36 (754 aa).

LRR repeat units follow at residues 51-72 and 73-94; these read NLRS…QYLC and SLQD…SRLQ. Positions 107-146 constitute an LRRCT domain; it reads NPVVRKDTDYRLFAVYTLQTLEKLDDRTVREGERKAAKLH. The span at 241–255 shows a compositional bias: basic and acidic residues; that stretch reads REMPSDNHQEDEFRH. A disordered region spans residues 241–270; the sequence is REMPSDNHQEDEFRHYSPRQSTVRSPEKMT. Positions 600 to 680 form a coiled coil; it reads NDMESLKQKL…EKTVAILHES (81 aa). The tract at residues 702-734 is disordered; that stretch reads YSGKALLPPEKGHHLGRSSPFGKSTLSSSSPVA. The segment covering 722-732 has biased composition (polar residues); the sequence is FGKSTLSSSSP.

The sequence is that of Leucine-rich repeat-containing protein 36 (LRRC36) from Homo sapiens (Human).